The following is a 110-amino-acid chain: Large ribosomal subunit protein uL22 (110 aa).

The protein belongs to the universal ribosomal protein uL22 family. In terms of assembly, part of the 50S ribosomal subunit.

Its function is as follows. This protein binds specifically to 23S rRNA; its binding is stimulated by other ribosomal proteins, e.g. L4, L17, and L20. It is important during the early stages of 50S assembly. It makes multiple contacts with different domains of the 23S rRNA in the assembled 50S subunit and ribosome. In terms of biological role, the globular domain of the protein is located near the polypeptide exit tunnel on the outside of the subunit, while an extended beta-hairpin is found that lines the wall of the exit tunnel in the center of the 70S ribosome. This Shigella flexneri serotype 5b (strain 8401) protein is Large ribosomal subunit protein uL22.